Reading from the N-terminus, the 855-residue chain is RE1-silencing transcription factor (855 aa).

Residues phenylalanine 141–histidine 163 form a C2H2-type 1 zinc finger. The disordered stretch occupies residues asparagine 172–asparagine 199. The span at proline 186–asparagine 199 shows a compositional bias: polar residues. 7 consecutive C2H2-type zinc fingers follow at residues isoleucine 204–histidine 226, phenylalanine 236–histidine 258, phenylalanine 264–histidine 286, phenylalanine 292–histidine 314, phenylalanine 320–histidine 343, leucine 349–histidine 371, and phenylalanine 377–histidine 400. A disordered region spans residues asparagine 458–serine 811. Composition is skewed to basic and acidic residues over residues glutamate 462–aspartate 472, asparagine 481–alanine 496, and alanine 504–leucine 535. Residues serine 548 to threonine 569 are compositionally biased toward polar residues. A compositionally biased stretch (basic and acidic residues) spans glutamine 570 to serine 580. The span at glutamine 594 to lysine 604 shows a compositional bias: basic residues. The segment covering arginine 628–glutamine 638 has biased composition (basic and acidic residues). The span at arginine 639–aspartate 648 shows a compositional bias: basic residues. A compositionally biased stretch (polar residues) spans proline 652–proline 662. Composition is skewed to basic and acidic residues over residues proline 711–glutamate 721 and lysine 799–serine 811. The segment at histidine 818 to histidine 840 adopts a C2H2-type 9 zinc-finger fold.

It is found in the nucleus. Its subcellular location is the cytoplasm. Functionally, transcriptional repressor which binds neuron-restrictive silencer element (NRSE) and represses neuronal gene transcription in non-neuronal cells. The polypeptide is RE1-silencing transcription factor (rest) (Danio rerio (Zebrafish)).